A 1998-amino-acid chain; its full sequence is Histone acetyltransferase KAT6A (1998 aa).

Positions Met-1 to Pro-77 constitute an SAMD1-like winged helix (WH) domain. The required for activation of RUNX1-1 stretch occupies residues Met-1–His-144. Positions Glu-52–Leu-166 are required for nuclear localization. Positions Lys-72–Asn-93 are disordered. One can recognise an H15 domain in the interval Gln-95 to Thr-171. An interaction with PML region spans residues His-144–Asp-662. The residue at position 172 (Lys-172) is an N6-acetyllysine. 2 consecutive PHD-type zinc fingers follow at residues Asp-199–Gln-258 and Leu-255–Ile-306. The interval Pro-312–Asp-662 is interaction with RUNX1-1. Residues Gly-336–Ser-377 are disordered. Residues Lys-350 and Lys-355 each carry the N6-acetyllysine modification. Thr-369 bears the Phosphothreonine; by PKB/AKT1 mark. At Ser-419 the chain carries Phosphoserine. The interval Lys-440 to Ser-464 is disordered. Over residues Lys-444–Gly-457 the composition is skewed to polar residues. Phosphoserine is present on Ser-471. The interval Ile-486–Pro-776 is catalytic. Residues Pro-502–Pro-776 form the MYST-type HAT domain. A mediates interaction with BRPF1, required for histone H3 acetyltransferase activity region spans residues Arg-505–Glu-808. The segment at Leu-535 to Trp-560 adopts a C2HC MYST-type zinc-finger fold. An N6-acetyllysine; by autocatalysis modification is found at Lys-602. Acetyl-CoA contacts are provided by residues Ser-643–Ile-647 and Gln-652–Arg-658. The active-site Proton donor/acceptor is the Glu-678. Position 682 (Ser-682) interacts with acetyl-CoA. Positions Val-783–Arg-947 are disordered. Residue Ser-785 is modified to Phosphoserine. A compositionally biased stretch (acidic residues) spans Ser-785–Lys-797. The segment covering Glu-798–Glu-840 has biased composition (basic and acidic residues). Lys-815 is subject to N6-acetyllysine. Residue Lys-835 forms a Glycyl lysine isopeptide (Lys-Gly) (interchain with G-Cter in SUMO2) linkage. Residues Arg-865–Arg-874 are compositionally biased toward basic residues. Basic and acidic residues predominate over residues Lys-875–Lys-886. The residue at position 900 (Tyr-900) is a Phosphotyrosine. Residues Cys-903–Glu-916 show a composition bias toward basic and acidic residues. Phosphoserine is present on residues Ser-940 and Ser-953. The interval Gly-982–Phe-1079 is disordered. Lys-1006 carries the N6-acetyllysine modification. Residues Thr-1008 to Asn-1029 are compositionally biased toward basic residues. Positions Ser-1030–Thr-1041 are enriched in low complexity. Composition is skewed to acidic residues over residues Glu-1042 to Asp-1052 and Phe-1064 to Glu-1077. A phosphoserine mark is found at Ser-1088, Ser-1089, and Ser-1114. 4 disordered regions span residues Gln-1096–Lys-1175, Pro-1195–Tyr-1436, Gln-1450–Gly-1567, and Thr-1630–Asn-1702. The span at Asp-1106 to Asp-1119 shows a compositional bias: acidic residues. The segment covering Asn-1135–Pro-1146 has biased composition (polar residues). Residues Met-1147–Gly-1173 show a composition bias toward basic residues. The span at Arg-1203 to Glu-1228 shows a compositional bias: basic and acidic residues. Composition is skewed to acidic residues over residues Ala-1229–Ala-1240 and Glu-1281–Thr-1298. Basic and acidic residues-rich tracts occupy residues His-1316–Asp-1333, Asp-1351–Asp-1360, and Asp-1392–Leu-1413. Low complexity predominate over residues His-1472 to Pro-1496. Over residues Gly-1501–Thr-1522 the composition is skewed to polar residues. The interaction with RUNX1-2 stretch occupies residues Gly-1510 to Arg-1635. The segment at Gly-1510–Ala-1735 is interaction with PML. The span at Asp-1527–Ser-1541 shows a compositional bias: low complexity. The segment covering Ile-1549–Gly-1567 has biased composition (polar residues). Composition is skewed to pro residues over residues Asn-1639–Gln-1658 and Pro-1665–Gln-1693. Residues Ser-1907 to Gln-1942 are required for activation of RUNX1-2.

This sequence belongs to the MYST (SAS/MOZ) family. Component of the MOZ/MORF complex composed at least of ING5, KAT6A, KAT6B, MEAF6 and one of BRPF1, BRD1/BRPF2 and BRPF3. Interacts with RUNX1; phosphorylation of RUNX1 enhances the interaction. Interacts with RUNX2. Interacts with p53/TP53. Interacts with PML and this interaction positively regulates its acetylation activity towards p53/TP53. In terms of processing, autoacetylated. Autoacetylation at Lys-602 is required for proper function. Phosphorylation at Thr-369 by PKB/AKT1 inhibits its interaction with PML and negatively regulates its acetylation activity towards p53/TP53.

It is found in the nucleus. Its subcellular location is the nucleolus. It localises to the nucleoplasm. The protein localises to the PML body. It carries out the reaction L-lysyl-[protein] + acetyl-CoA = N(6)-acetyl-L-lysyl-[protein] + CoA + H(+). Histone acetyltransferase that acetylates lysine residues in histone H3 and histone H4 (in vitro). Component of the MOZ/MORF complex which has a histone H3 acetyltransferase activity. May act as a transcriptional coactivator for RUNX1 and RUNX2. Acetylates p53/TP53 at 'Lys-120' and 'Lys-382' and controls its transcriptional activity via association with PML. This Rattus norvegicus (Rat) protein is Histone acetyltransferase KAT6A (Kat6a).